Consider the following 128-residue polypeptide: Glycine cleavage system H protein (128 aa).

Positions 22–104 constitute a Lipoyl-binding domain; sequence AIVVGITDFA…YEEGWMITIE (83 aa). Lys-63 carries the N6-lipoyllysine modification.

The protein belongs to the GcvH family. In terms of assembly, the glycine cleavage system is composed of four proteins: P, T, L and H. It depends on (R)-lipoate as a cofactor.

The glycine cleavage system catalyzes the degradation of glycine. The H protein shuttles the methylamine group of glycine from the P protein to the T protein. The chain is Glycine cleavage system H protein from Anaeromyxobacter dehalogenans (strain 2CP-1 / ATCC BAA-258).